A 680-amino-acid polypeptide reads, in one-letter code: DNA-directed RNA polymerase subunit beta' (680 aa).

Zn(2+) contacts are provided by Cys69, Cys71, Cys87, and Cys90. Positions 489, 491, and 493 each coordinate Mg(2+).

The protein belongs to the RNA polymerase beta' chain family. RpoC1 subfamily. In terms of assembly, in plastids the minimal PEP RNA polymerase catalytic core is composed of four subunits: alpha, beta, beta', and beta''. When a (nuclear-encoded) sigma factor is associated with the core the holoenzyme is formed, which can initiate transcription. Mg(2+) is required as a cofactor. It depends on Zn(2+) as a cofactor.

It localises to the plastid. Its subcellular location is the chloroplast. The enzyme catalyses RNA(n) + a ribonucleoside 5'-triphosphate = RNA(n+1) + diphosphate. Functionally, DNA-dependent RNA polymerase catalyzes the transcription of DNA into RNA using the four ribonucleoside triphosphates as substrates. This is DNA-directed RNA polymerase subunit beta' from Aethionema grandiflorum (Persian stone-cress).